The sequence spans 229 residues: Large ribosomal subunit protein uL1 (229 aa).

This sequence belongs to the universal ribosomal protein uL1 family. Part of the 50S ribosomal subunit.

Functionally, binds directly to 23S rRNA. The L1 stalk is quite mobile in the ribosome, and is involved in E site tRNA release. In terms of biological role, protein L1 is also a translational repressor protein, it controls the translation of the L11 operon by binding to its mRNA. In Desulforamulus reducens (strain ATCC BAA-1160 / DSM 100696 / MI-1) (Desulfotomaculum reducens), this protein is Large ribosomal subunit protein uL1.